The chain runs to 356 residues: Trifolitoxin operon protein TfxC (356 aa).

The sequence is that of Trifolitoxin operon protein TfxC (tfxC) from Rhizobium leguminosarum bv. trifolii.